The sequence spans 81 residues: uncharacterized protein (81 aa).

Residues 55-81 are disordered; that stretch reads LDKRNSNNKIEKSENTGENHDNNQDQK.

This is an uncharacterized protein from Thermoproteus tenax virus 1 (strain KRA1) (TTV1).